A 193-amino-acid chain; its full sequence is Cysteine and glycine-rich protein 1 (193 aa).

Positions 10–61 constitute an LIM zinc-binding 1 domain; sequence CGVCQKTVYFAEEVQCEGNSFHKSCFLCMVCKKNLDSTTVAVHGEEIYCKSC. A Nuclear localization signal motif is present at residues 64–69; it reads KKYGPK. S81 carries the phosphoserine modification. The residue at position 84 (K84) is an N6-acetyllysine. K91 is covalently cross-linked (Glycyl lysine isopeptide (Lys-Gly) (interchain with G-Cter in SUMO2)). 4 positions are modified to N6-acetyllysine: K112, K131, K137, and K161. Positions 119–170 constitute an LIM zinc-binding 2 domain; it reads CPRCSQAVYAAEKVIGAGKSWHKACFRCAKCGKGLESTTLADKDGEIYCKGC. S192 is modified (phosphoserine).

As to quaternary structure, interacts with ASCC1; ASCC2 and TRIP4.

It is found in the nucleus. In terms of biological role, could play a role in neuronal development. The sequence is that of Cysteine and glycine-rich protein 1 (CSRP1) from Homo sapiens (Human).